The chain runs to 335 residues: Holliday junction branch migration complex subunit RuvB (335 aa).

The large ATPase domain (RuvB-L) stretch occupies residues 4–183 (ADNLNVTSII…FGIVQRLEFY (180 aa)). ATP contacts are provided by residues Arg23, Gly64, Lys67, Thr68, Thr69, 130-132 (EDY), Arg173, Tyr183, and Arg220. Thr68 is a binding site for Mg(2+). Positions 184 to 254 (PTKDLQNIIS…VAMNALNMLN (71 aa)) are small ATPAse domain (RuvB-S). The tract at residues 257-335 (TAGFNFMDRQ…HFSLKQSRDI (79 aa)) is head domain (RuvB-H). Arg293, Arg312, and Arg317 together coordinate DNA.

It belongs to the RuvB family. Homohexamer. Forms an RuvA(8)-RuvB(12)-Holliday junction (HJ) complex. HJ DNA is sandwiched between 2 RuvA tetramers; dsDNA enters through RuvA and exits via RuvB. An RuvB hexamer assembles on each DNA strand where it exits the tetramer. Each RuvB hexamer is contacted by two RuvA subunits (via domain III) on 2 adjacent RuvB subunits; this complex drives branch migration. In the full resolvosome a probable DNA-RuvA(4)-RuvB(12)-RuvC(2) complex forms which resolves the HJ.

It localises to the cytoplasm. It catalyses the reaction ATP + H2O = ADP + phosphate + H(+). The RuvA-RuvB-RuvC complex processes Holliday junction (HJ) DNA during genetic recombination and DNA repair, while the RuvA-RuvB complex plays an important role in the rescue of blocked DNA replication forks via replication fork reversal (RFR). RuvA specifically binds to HJ cruciform DNA, conferring on it an open structure. The RuvB hexamer acts as an ATP-dependent pump, pulling dsDNA into and through the RuvAB complex. RuvB forms 2 homohexamers on either side of HJ DNA bound by 1 or 2 RuvA tetramers; 4 subunits per hexamer contact DNA at a time. Coordinated motions by a converter formed by DNA-disengaged RuvB subunits stimulates ATP hydrolysis and nucleotide exchange. Immobilization of the converter enables RuvB to convert the ATP-contained energy into a lever motion, pulling 2 nucleotides of DNA out of the RuvA tetramer per ATP hydrolyzed, thus driving DNA branch migration. The RuvB motors rotate together with the DNA substrate, which together with the progressing nucleotide cycle form the mechanistic basis for DNA recombination by continuous HJ branch migration. Branch migration allows RuvC to scan DNA until it finds its consensus sequence, where it cleaves and resolves cruciform DNA. This is Holliday junction branch migration complex subunit RuvB from Baumannia cicadellinicola subsp. Homalodisca coagulata.